The following is a 270-amino-acid chain: Peflin (270 aa).

The disordered stretch occupies residues 1 to 97; the sequence is MSYQYGQGYS…YRQQGSAGNV (97 aa). 5 consecutive repeat copies span residues 22–30, 44–54, 62–70, 72–81, and 83–91. Positions 22-91 are 5 X 9 AA approximate tandem repeat of [AP]-P-G-G-P-Y-G-G-P-P; sequence PPRAPYAGGP…QPQGGPYRQQ (70 aa). Low complexity-rich tracts occupy residues 26–47 and 55–66; these read PYAG…PPGQ and YGSYGQPGPRAP. Residues 67–84 show a composition bias toward gly residues; that stretch reads YGGGQAPGGPYGGYGQPQ. 5 consecutive EF-hand domains span residues 100 to 135, 141 to 169, 170 to 202, 203 to 239, and 240 to 269; these read GVNP…FNNS, TCIM…WTFL, QQWR…MGYN, LSPQ…LQSM, and TQAF…ITRL. Residues Asp113, Asp115, Ser117, Tyr119, and Glu124 each contribute to the Ca(2+) site. Residues Asp180, Asp182, Ser184, Ser186, and Glu191 each coordinate Ca(2+).

As to quaternary structure, heterodimer; heterodimerizes (via the EF-hand 5) with pdcd6.

It is found in the cytoplasm. The protein resides in the endoplasmic reticulum. The protein localises to the membrane. It localises to the cytoplasmic vesicle. Its subcellular location is the COPII-coated vesicle membrane. Calcium-binding protein that acts as an adapter that bridges unrelated proteins or stabilizes weak protein-protein complexes in response to calcium. Acts as a negative regulator of ER-Golgi transport. In Danio rerio (Zebrafish), this protein is Peflin.